We begin with the raw amino-acid sequence, 133 residues long: Arsenate reductase 1 (133 aa).

Catalysis depends on nucleophile residues Cys-10, Cys-82, and Cys-89. Cystine bridges form between Cys-10–Cys-82 and Cys-82–Cys-89.

Belongs to the low molecular weight phosphotyrosine protein phosphatase family. Thioredoxin-coupled ArsC subfamily.

It localises to the cytoplasm. The enzyme catalyses arsenate + [thioredoxin]-dithiol + H(+) = arsenite + [thioredoxin]-disulfide + H2O. Catalyzes the reduction of arsenate [As(V)] to arsenite [As(III)]. This chain is Arsenate reductase 1, found in Staphylococcus haemolyticus (strain JCSC1435).